The chain runs to 151 residues: Endoribonuclease YbeY (151 aa).

H108, H112, and D118 together coordinate Zn(2+).

This sequence belongs to the endoribonuclease YbeY family. Zn(2+) is required as a cofactor.

It localises to the cytoplasm. Functionally, single strand-specific metallo-endoribonuclease involved in late-stage 70S ribosome quality control and in maturation of the 3' terminus of the 16S rRNA. The chain is Endoribonuclease YbeY from Porphyromonas gingivalis (strain ATCC 33277 / DSM 20709 / CIP 103683 / JCM 12257 / NCTC 11834 / 2561).